We begin with the raw amino-acid sequence, 265 residues long: Interleukin-1 alpha (265 aa).

A propeptide spanning residues 1–108 (MAKVPDLFED…DTEEVIMKPR (108 aa)) is cleaved from the precursor. N6-acetyllysine is present on lysine 78. Positions 78 to 82 (KKRRL) are nuclear localization signal (NLS). Serine 83 carries the phosphoserine modification. Asparagine 98 and asparagine 137 each carry an N-linked (GlcNAc...) asparagine glycan.

It belongs to the IL-1 family. Monomer. Interacts with TMED10; the interaction mediates the translocation from the cytoplasm into the ERGIC (endoplasmic reticulum-Golgi intermediate compartment) and thereby secretion. Interacts with IL1R1. Interacts with S100A13; this interaction is the first step in the export of IL1A, followed by direct translocation of this complex across the plasma membrane. Post-translationally, acetylated within its nuclear localization sequence, which impacts subcellular localization. Proteolytic processed by CAPN1 in a calcium-dependent manner. Cleavage from 31 kDa precursor to 18 kDa biologically active molecules. In terms of processing, phosphorylated. Phosphorylation greatly enhances susceptibility to digestion and promotes the conversion of pre-IL1A alpha to the biologically active IL1A.

It localises to the nucleus. Its subcellular location is the cytoplasm. The protein localises to the secreted. Functionally, cytokine constitutively present intracellularly in nearly all resting non-hematopoietic cells that plays an important role in inflammation and bridges the innate and adaptive immune systems. After binding to its receptor IL1R1 together with its accessory protein IL1RAP, forms the high affinity interleukin-1 receptor complex. Signaling involves the recruitment of adapter molecules such as MYD88, IRAK1 or IRAK4. In turn, mediates the activation of NF-kappa-B and the three MAPK pathways p38, p42/p44 and JNK pathways. Within the cell, acts as an alarmin and cell death results in its liberation in the extracellular space after disruption of the cell membrane to induce inflammation and alert the host to injury or damage. In addition to its role as a danger signal, which occurs when the cytokine is passively released by cell necrosis, directly senses DNA damage and acts as signal for genotoxic stress without loss of cell integrity. This Canis lupus familiaris (Dog) protein is Interleukin-1 alpha (IL1A).